Consider the following 373-residue polypeptide: Glutamate 5-kinase (373 aa).

Lys15 lines the ATP pocket. Residues Ser55, Asp142, and Asn154 each coordinate substrate. Residues Thr174–Asp175 and Thr216–Lys222 contribute to the ATP site. The 79-residue stretch at Ala281 to Arg359 folds into the PUA domain.

It belongs to the glutamate 5-kinase family.

The protein localises to the cytoplasm. It carries out the reaction L-glutamate + ATP = L-glutamyl 5-phosphate + ADP. The protein operates within amino-acid biosynthesis; L-proline biosynthesis; L-glutamate 5-semialdehyde from L-glutamate: step 1/2. Its function is as follows. Catalyzes the transfer of a phosphate group to glutamate to form L-glutamate 5-phosphate. In Citrifermentans bemidjiense (strain ATCC BAA-1014 / DSM 16622 / JCM 12645 / Bem) (Geobacter bemidjiensis), this protein is Glutamate 5-kinase.